The primary structure comprises 640 residues: Envelope glycoprotein (640 aa).

A signal peptide spans 1–32; that stretch reads MEGPAFSKPLKDKINPWGPLIILGILIRAGVS. At 33–582 the chain is on the extracellular side; sequence VQHDSPHQVF…FNKSPWFTTL (550 aa). N-linked (GlcNAc...) asparagine; by host glycosylation is found at N43 and N58. 2 disulfide bridges follow: C109–C126 and C118–C131. N297 carries an N-linked (GlcNAc...) asparagine; by host glycan. 6 disulfides stabilise this stretch: C307-C310, C307-C535, C337-C391, C356-C368, C398-C411, and C527-C534. The CXXC motif lies at 307-310; it reads CWLC. N-linked (GlcNAc...) asparagine; by host glycosylation is found at N329 and N336. N-linked (GlcNAc...) asparagine; by host glycosylation is present at N369. The interval 444 to 464 is fusion peptide; that stretch reads VSLTLALLLGGLTMGGIAAGV. The stretch at 473–509 forms a coiled coil; it reads ATQQFQQLQAAMHDDLKEVEKSITNLEKSLTSLSEVV. Positions 510–526 are immunosuppression; the sequence is LQNRRGLDLLFLKEGGL. The short motif at 527–535 is the CX6CC element; it reads CAALKEECC. A helical membrane pass occupies residues 583–603; sequence ISTIMGPLIILLLILLFGPWI. Residues 604–640 are Cytoplasmic-facing; it reads LNRLVQFIKDRISVVQALVLTQQYHQLKTIGDCKSRE. Residues 627–630 carry the YXXL motif; contains endocytosis signal motif; sequence YHQL.

In terms of assembly, the mature envelope protein (Env) consists of a trimer of SU-TM heterodimers attached by a labile interchain disulfide bond. Post-translationally, specific enzymatic cleavages in vivo yield mature proteins. Envelope glycoproteins are synthesized as an inactive precursor that is N-glycosylated and processed likely by host cell furin or by a furin-like protease in the Golgi to yield the mature SU and TM proteins. The cleavage site between SU and TM requires the minimal sequence [KR]-X-[KR]-R. The R-peptide is released from the C-terminus of the cytoplasmic tail of the TM protein upon particle formation as a result of proteolytic cleavage by the viral protease. Cleavage of this peptide is required for TM to become fusogenic. In terms of processing, the CXXC motif is highly conserved across a broad range of retroviral envelope proteins. It is thought to participate in the formation of a labile disulfide bond possibly with the CX6CC motif present in the transmembrane protein. Isomerization of the intersubunit disulfide bond to an SU intrachain disulfide bond is thought to occur upon receptor recognition in order to allow membrane fusion. The R-peptide is palmitoylated.

Its subcellular location is the virion membrane. The protein localises to the host cell membrane. In terms of biological role, the surface protein (SU) attaches the virus to the host cell by binding to its receptor. This interaction triggers the refolding of the transmembrane protein (TM) and is thought to activate its fusogenic potential by unmasking its fusion peptide. Fusion occurs at the host cell plasma membrane. Functionally, the transmembrane protein (TM) acts as a class I viral fusion protein. Under the current model, the protein has at least 3 conformational states: pre-fusion native state, pre-hairpin intermediate state, and post-fusion hairpin state. During viral and target cell membrane fusion, the coiled coil regions (heptad repeats) assume a trimer-of-hairpins structure, positioning the fusion peptide in close proximity to the C-terminal region of the ectodomain. The formation of this structure appears to drive apposition and subsequent fusion of viral and target cell membranes. Membranes fusion leads to delivery of the nucleocapsid into the cytoplasm. In Mus musculus (Mouse), this protein is Envelope glycoprotein (env).